Here is a 1741-residue protein sequence, read N- to C-terminus: MSRWGKNIVVPLDSLCKEKENTNRPTVARSVGTVGKWGKMGFTSTRTYTLPAIHPMAAAAAAAAAAASPSQSPASTQDHDPNDLSVSVPEPPKPKKFFKSRNTAPPEVIAQIIQQLPHCGAGASPMRDHFSSAGAGAGGLTPTSGAQEAGGVKLKPGKGASSAERKRKSPKKKAATTSASTPSTPGAFYGASDRDGDGLSDPASEQPEQPSSASGKQKQKKPKEEKKLKPEAPPSRVLGRARKAVNYREVDEDERYPTPTKDLIIPKAGRQPAEVAATATLAAASSEAFISSTFGSPGSEPSLPPPTSAPSASASTSSQLPSASGSASNPPSASRTPEHPPIVLRISKGTSRLVSTDSEEPPSSSPAHQNQLNQLSVTEEEPAERSGDETVPASTPKITVKPLRPPTAADSVDGSSAAVGGASAGDSFEERKSQSLEPNEDEEEEEEEEDEEEEPPEINYCTVKISPDKPPKERLKLIIKTDVIRNAIAKAAAAAESRSEKKSRSKKHKHKQLLAAGSGAAPASGATPAEINSEFKTPSPHLALSEANSQQAQHTPSHLHQLHQLHPQRGSAVISPTTRSDHDFDSQSSVLGSISSKGNSTPQLLAQAVQEDSCVIRSRGSSVITSDLETSQHSSLVAPPSDIESRLESMMMTIDGAGTGAASAVPETPLQEDILAVLRGEVPRLNGNTDPEPTEEEDQQQQPKRATRGRGRKANNNVDVTPPATETRTRGRAKGADATTAAISPPTGKRNTRGTRGSRKAEQEVDMEVDETAMTTVPANEEQLEQATLPPRRGRNAAARANNNNLASVNNNINKIAANLSAKAEASRLAEGGVAGGAARSYGRKRKNQQVTQVLQQEPVPEEQETPDAEEEQPTPAKIPHTDHREHSPDHDPDPDPDELSNNSNNSSLQHDGSSSSPPPRDFKFKDKFKRTLTLDTQGAANAGAGGAAAAAPPESSGEQRGAVKLVISKKKGSIFKSRALVPSDQAEQATVAKRHLYKHSWDAALEANGGGTNSDASNASASGVGVAGAKDHLHHLAAGKSDGDFGDSPSSNNNGSSSACSSASTLRGDSPALGKISRLAGKQGVPATSTSSDAFDLDLEPIAGELDLERSAAGASAGGTGATTGGGGATGGGGPVRVDRKTKDYYPVVRNVKTAHQIQEIGEYQEMDDDVEYILDALQPHNPPATRCLSALQLAAKCMMPAFRMHVRAHGVVTKFFKALSDANKDLSLGLCTSAIMYILSQEGLNMDLDRDSLELMINLLEADGVGGSTETGHPDRAGYDRNKQKVRELCEEIKAQGKGTHLNVDSLTVGTLAMETLLSLTSKRAGEWFKEDLRKLGGLEHIIKTISDFCRPVIACDTEIDWQPTLLDNMQTVARCLRVLENVTQHNETNQRYMLTSGQGKAVETLCQLYRLCSRQIMLHPSDGGGSNKEHPGVAMRELLVPVLKVLINLTHTFNEAQPSLGAELLGQRGDVVETSFRLLLLSANYIPDQCVFELSILVLTLLINLCMHTVPNRAALMQAAAPAEYVADNPPAQGSVSALQALLEYFYKCEELARLVEKNTDAFLESNEKGKKKQEEVEETVNNLVQRAGHHMEHTLKGSYAAILVGNLIADNELYESVVRRQLRGNSFKEIIGVLEKYHTFMNLTSSLEAAFVAHMKSTKRIIDNFKKRDYIYEHSDEHDNPLPLNLETTAQVLAVGADASHAATSSTTVGSGSAPSSTSATGTTRAPRVYKTYSSHR.

Disordered stretches follow at residues 68-100 (SPSQ…FFKS), 119-277 (CGAG…EVAA), 291-472 (SSTF…KPPK), 490-612 (KAAA…VQED), 675-810 (LAVL…ASVN), 823-963 (KAEA…QRGA), 1038-1068 (AAGK…STLR), 1112-1141 (SAAG…RVDR), and 1708-1741 (TSST…SSHR). Positions 165 to 174 (RKRKSPKKKA) are enriched in basic residues. Residues 175 to 185 (ATTSASTPSTP) are compositionally biased toward low complexity. Position 258 is a phosphothreonine (threonine 258). The span at 309–334 (APSASASTSSQLPSASGSASNPPSAS) shows a compositional bias: low complexity. Phosphoserine is present on serine 355. Residues 367–377 (AHQNQLNQLSV) show a composition bias toward polar residues. Residues 408–426 (AADSVDGSSAAVGGASAGD) show a composition bias toward low complexity. Residues 438–456 (PNEDEEEEEEEEDEEEEPP) show a composition bias toward acidic residues. Positions 503–512 (SRSKKHKHKQ) are enriched in basic residues. Low complexity-rich tracts occupy residues 515 to 529 (AAGS…ATPA) and 553 to 568 (QHTP…LHPQ). Polar residues predominate over residues 586–604 (SQSSVLGSISSKGNSTPQL). 2 stretches are compositionally biased toward low complexity: residues 796 to 810 (NAAA…ASVN) and 849 to 859 (QQVTQVLQQEP). A compositionally biased stretch (acidic residues) spans 860-873 (VPEEQETPDAEEEQ). The span at 880–894 (PHTDHREHSPDHDPD) shows a compositional bias: basic and acidic residues. Serine 888 carries the post-translational modification Phosphoserine. Low complexity-rich tracts occupy residues 939 to 952 (GAAN…AAAA) and 1047 to 1065 (GDSP…SSAS). Residues 1117–1136 (SAGGTGATTGGGGATGGGGP) are compositionally biased toward gly residues. The region spanning 1140–1648 (DRKTKDYYPV…EKYHTFMNLT (509 aa)) is the WAPL domain. Residues 1708–1730 (TSSTTVGSGSAPSSTSATGTTRA) are compositionally biased toward low complexity.

This sequence belongs to the WAPL family.

Has a role in female meiotic chromosome segregation in females; proximal heterochromatin is involved in chromosome pairing during female meiosis. Is a dominant suppressor of both white and Stubble position-effect variegation (PEV), while it is a weak enhancer of brown variegation. This Drosophila melanogaster (Fruit fly) protein is Protein wings apart-like.